A 78-amino-acid polypeptide reads, in one-letter code: MEKKIIFLCFFVSLLTLPEFISSQVLVEDDVPFPEKKFADRGECIRACAAKFTDGDLSKIKDVLPRYYKCVCWYYPTS.

An N-terminal signal peptide occupies residues 1 to 23 (MEKKIIFLCFFVSLLTLPEFISS). The tract at residues 34–37 (PEKK) is important for inhibition of KCNQ4. 2 disulfide bridges follow: Cys-44/Cys-70 and Cys-48/Cys-72.

It belongs to the SLPTX(15) family. As to expression, expressed by the venom gland.

The protein localises to the secreted. This Scolopendra mutilans (Chinese red-headed centipede) protein is U-scoloptoxin(15)-Ssm2a.